A 304-amino-acid polypeptide reads, in one-letter code: Protoheme IX farnesyltransferase 1 (304 aa).

Helical transmembrane passes span 24 to 44 (VVVL…KAPL), 47 to 67 (FVPW…AGAA), 99 to 119 (MALG…LAFT), 122 to 142 (LTAW…TGFL), 150 to 170 (IVIG…AITG), 176 to 196 (PLLL…ALCI), 228 to 248 (LVLF…LVYL), and 280 to 300 (YSIV…YLPL).

It belongs to the UbiA prenyltransferase family. Protoheme IX farnesyltransferase subfamily.

The protein localises to the cell inner membrane. It catalyses the reaction heme b + (2E,6E)-farnesyl diphosphate + H2O = Fe(II)-heme o + diphosphate. The protein operates within porphyrin-containing compound metabolism; heme O biosynthesis; heme O from protoheme: step 1/1. Converts heme B (protoheme IX) to heme O by substitution of the vinyl group on carbon 2 of heme B porphyrin ring with a hydroxyethyl farnesyl side group. The protein is Protoheme IX farnesyltransferase 1 of Pseudomonas paraeruginosa (strain DSM 24068 / PA7) (Pseudomonas aeruginosa (strain PA7)).